Consider the following 173-residue polypeptide: Acireductone dioxygenase (173 aa).

The disordered stretch occupies residues 1–20 (MKVYEYDNSTEDQREDHDSG). Histidine 81, histidine 83, glutamate 87, and histidine 126 together coordinate Fe(2+). Histidine 81, histidine 83, glutamate 87, and histidine 126 together coordinate Ni(2+).

It belongs to the acireductone dioxygenase (ARD) family. It depends on Fe(2+) as a cofactor. Ni(2+) serves as cofactor.

It is found in the cytoplasm. Its subcellular location is the nucleus. It carries out the reaction 1,2-dihydroxy-5-(methylsulfanyl)pent-1-en-3-one + O2 = 4-methylsulfanyl-2-oxobutanoate + formate + 2 H(+). It catalyses the reaction 1,2-dihydroxy-5-(methylsulfanyl)pent-1-en-3-one + O2 = 3-(methylsulfanyl)propanoate + CO + formate + 2 H(+). It functions in the pathway amino-acid biosynthesis; L-methionine biosynthesis via salvage pathway; L-methionine from S-methyl-5-thio-alpha-D-ribose 1-phosphate: step 5/6. Its function is as follows. Catalyzes 2 different reactions between oxygen and the acireductone 1,2-dihydroxy-3-keto-5-methylthiopentene (DHK-MTPene) depending upon the metal bound in the active site. Fe-containing acireductone dioxygenase (Fe-ARD) produces formate and 2-keto-4-methylthiobutyrate (KMTB), the alpha-ketoacid precursor of methionine in the methionine recycle pathway. Ni-containing acireductone dioxygenase (Ni-ARD) produces methylthiopropionate, carbon monoxide and formate, and does not lie on the methionine recycle pathway. The chain is Acireductone dioxygenase from Tuber melanosporum (strain Mel28) (Perigord black truffle).